Consider the following 90-residue polypeptide: Putative UPF0401 protein YpjI (90 aa).

Belongs to the UPF0401 family.

This is Putative UPF0401 protein YpjI (ypjI) from Escherichia coli (strain K12).